Reading from the N-terminus, the 315-residue chain is Spermidine synthase 1 (315 aa).

A PABS domain is found at 25 to 262 (PGWFSEISPL…GMIGFMLCST (238 aa)). Q56 provides a ligand contact to S-adenosyl 3-(methylsulfanyl)propylamine. Residue Y86 coordinates putrescine. S-adenosyl 3-(methylsulfanyl)propylamine-binding positions include Q87, D111, E131, 162 to 163 (DG), and D181. D181 acts as the Proton acceptor in catalysis. Putrescine contacts are provided by residues 181-184 (DSSD) and Y250.

The protein belongs to the spermidine/spermine synthase family.

The enzyme catalyses S-adenosyl 3-(methylsulfanyl)propylamine + putrescine = S-methyl-5'-thioadenosine + spermidine + H(+). The protein operates within amine and polyamine biosynthesis; spermidine biosynthesis; spermidine from putrescine: step 1/1. In Hyoscyamus niger (Black henbane), this protein is Spermidine synthase 1.